A 202-amino-acid polypeptide reads, in one-letter code: Regulator of G-protein signaling 16 (202 aa).

Residues Cys2 and Cys12 are each lipidated (S-palmitoyl cysteine). The 117-residue stretch at 65–181 (SFDLLLSSKN…LKSPAYRDLA (117 aa)) folds into the RGS domain. Tyr168 carries the post-translational modification Phosphotyrosine; by EGFR. Tyr177 carries the post-translational modification Phosphotyrosine.

Interacts with GNAI1 and GNAQ. Interacts with GNAI2, GNAI3 and GNAO1. Post-translationally, palmitoylated on Cys-2 and/or Cys-12. Phosphorylated. Phosphorylation at Tyr-168 by EGFR enhances GTPase accelerating (GAP) activity toward GNAI1. As to expression, abundantly expressed in retina with lower levels of expression in most other tissues.

The protein resides in the membrane. Functionally, regulates G protein-coupled receptor signaling cascades. Inhibits signal transduction by increasing the GTPase activity of G protein alpha subunits, thereby driving them into their inactive GDP-bound form. Plays an important role in the phototransduction cascade by regulating the lifetime and effective concentration of activated transducin alpha. May regulate extra and intracellular mitogenic signals. This is Regulator of G-protein signaling 16 (RGS16) from Homo sapiens (Human).